The sequence spans 434 residues: 3-phosphoshikimate 1-carboxyvinyltransferase (434 aa).

3-phosphoshikimate is bound by residues K22, S23, and R27. K22 contacts phosphoenolpyruvate. The phosphoenolpyruvate site is built by G93 and R121. 3-phosphoshikimate is bound by residues S168, S169, Q170, S199, D320, and K347. Phosphoenolpyruvate is bound at residue Q170. D320 serves as the catalytic Proton acceptor. Phosphoenolpyruvate contacts are provided by R351, R394, and K419.

Belongs to the EPSP synthase family. In terms of assembly, monomer.

It localises to the cytoplasm. The catalysed reaction is 3-phosphoshikimate + phosphoenolpyruvate = 5-O-(1-carboxyvinyl)-3-phosphoshikimate + phosphate. The protein operates within metabolic intermediate biosynthesis; chorismate biosynthesis; chorismate from D-erythrose 4-phosphate and phosphoenolpyruvate: step 6/7. In terms of biological role, catalyzes the transfer of the enolpyruvyl moiety of phosphoenolpyruvate (PEP) to the 5-hydroxyl of shikimate-3-phosphate (S3P) to produce enolpyruvyl shikimate-3-phosphate and inorganic phosphate. The polypeptide is 3-phosphoshikimate 1-carboxyvinyltransferase (Burkholderia cenocepacia (strain ATCC BAA-245 / DSM 16553 / LMG 16656 / NCTC 13227 / J2315 / CF5610) (Burkholderia cepacia (strain J2315))).